A 556-amino-acid polypeptide reads, in one-letter code: Arginine--tRNA ligase (556 aa).

Residues 132–142 (ANPTGDLHLGH) carry the 'HIGH' region motif.

Belongs to the class-I aminoacyl-tRNA synthetase family. As to quaternary structure, monomer.

It localises to the cytoplasm. It carries out the reaction tRNA(Arg) + L-arginine + ATP = L-arginyl-tRNA(Arg) + AMP + diphosphate. The polypeptide is Arginine--tRNA ligase (Shouchella clausii (strain KSM-K16) (Alkalihalobacillus clausii)).